A 624-amino-acid polypeptide reads, in one-letter code: MTQAEKGDAENGKEKGGEKEKEQRGVKRPIVPALVPESLQEQIQSNFIVVIHPGSTTLRIGRATDTLPASIPHVIARRHKQQGQPLYKDNWLLREGLNKPESNEQRQNGLKMVDQAIWSKKMSNGTRRIPVSPEQARSYNKQMRPAILDHCSGNKWTNTSHHPEFLVGEEALYVNPLDCYNIHWPIRRGQLNIHPGPGGSLTAVLADIEVIWSHAIQKYLEIPLKDLKYYRCILLIPDIYNKQHVKELVNMILMKMGFSGIVVHQESVCATFGSGLSSTCIVDVGDQKTSVCCVEDGVSHRNTRLCLAYGGSDVSRCFYWLMQRAGFPYRECQLTNKMDCLLLQHLKETFCHLDQDISGLQDHEFQIRHPDSPALLYQFRLGDEKLQAPMALFYPATFGIVGQKMTTLQHRSQGDPEDPHDEHYLLATQSKQEQSAKATADRKSASKPIGFEGDLRGQSSDLPERLHAQEVDLGSSQGDCLMAGNESEEALTALMSRKTAISLFEGKALGLDKAILHSIDCCSSDDTKKKMYSSILVVGGGLMFHKAQEFLQHRILNKMPPSFRRIIENVDVITRPKDMDPRLIAWKGGAVLACLDTTQELWIYQREWQRFGVRMLRERAAFVW.

Methionine 1 carries the N-acetylmethionine modification. The span at 1-25 (MTQAEKGDAENGKEKGGEKEKEQRG) shows a compositional bias: basic and acidic residues. Positions 1-29 (MTQAEKGDAENGKEKGGEKEKEQRGVKRP) are disordered. Residues serine 55 and threonine 56 each coordinate ATP. Serine 132 carries the post-translational modification Phosphoserine. Residue 283–286 (DVGD) coordinates ATP. The residue at position 412 (serine 412) is a Phosphoserine. Positions 430–460 (SKQEQSAKATADRKSASKPIGFEGDLRGQSS) are disordered.

Belongs to the actin family. ARP8 subfamily. As to quaternary structure, component of the chromatin remodeling INO80 complex; specifically part of a complex module associated with the DBINO domain of INO80. Exists as monomers and dimers, but the dimer is most probably the biologically relevant form required for stable interactions with histones that exploits the twofold symmetry of the nucleosome core.

The protein resides in the nucleus. It is found in the chromosome. Its function is as follows. Plays an important role in the functional organization of mitotic chromosomes. Exhibits low basal ATPase activity, and unable to polymerize. Functionally, proposed core component of the chromatin remodeling INO80 complex which is involved in transcriptional regulation, DNA replication and probably DNA repair. Required for the recruitment of INO80 (and probably the INO80 complex) to sites of DNA damage Strongly prefer nucleosomes and H3-H4 tetramers over H2A-H2B dimers, suggesting it may act as a nucleosome recognition module within the complex. In Ailuropoda melanoleuca (Giant panda), this protein is Actin-related protein 8 (ACTR8).